Here is a 240-residue protein sequence, read N- to C-terminus: Large ribosomal subunit protein bL25 (240 aa).

2 disordered regions span residues 1–23 (MATV…ARAE) and 207–240 (PAAA…AKKK).

Belongs to the bacterial ribosomal protein bL25 family. CTC subfamily. Part of the 50S ribosomal subunit; part of the 5S rRNA/L5/L18/L25 subcomplex. Contacts the 5S rRNA. Binds to the 5S rRNA independently of L5 and L18.

Functionally, this is one of the proteins that binds to the 5S RNA in the ribosome where it forms part of the central protuberance. This is Large ribosomal subunit protein bL25 from Rhodopseudomonas palustris (strain BisB18).